The following is a 102-amino-acid chain: Small ribosomal subunit protein uS10 (102 aa).

The protein belongs to the universal ribosomal protein uS10 family. Part of the 30S ribosomal subunit.

Involved in the binding of tRNA to the ribosomes. This is Small ribosomal subunit protein uS10 from Listeria innocua serovar 6a (strain ATCC BAA-680 / CLIP 11262).